A 455-amino-acid polypeptide reads, in one-letter code: Tyramine receptor Ser-2 (455 aa).

The Extracellular portion of the chain corresponds to 1–60; it reads MFRNYTDSVQEMVLRAIDSIRDSVINASSAVSTTTLPPLDIPMTSMKPPSIIPTVELVLG. N-linked (GlcNAc...) asparagine glycosylation is found at Asn4 and Asn26. A helical membrane pass occupies residues 61–83; the sequence is TITYLVIIAMTVVGNTLVVVAVF. The Cytoplasmic portion of the chain corresponds to 84 to 93; the sequence is SYRPLKKVQN. Residues 94–115 traverse the membrane as a helical segment; it reads YFLVSLAASDLAVAIFVMPLHV. The Extracellular portion of the chain corresponds to 116 to 133; sequence VTFLAGGKWLLGVTVCQF. A disulfide bridge connects residues Cys131 and Cys209. A helical transmembrane segment spans residues 134 to 154; the sequence is FTTADILLCTSSILNLCAIAL. Over 155–174 the chain is Cytoplasmic; sequence DRYWAIHNPINYAQKRTTKF. The helical transmembrane segment at 175-197 threads the bilayer; sequence VCIVIVIVWILSMLISVPPIIGW. Residues 198–221 lie on the Extracellular side of the membrane; it reads NNWQENMMEDSCGLSTEKAFVVFS. Residues 222–243 form a helical membrane-spanning segment; the sequence is AAGSFFLPLLVMVVVYVKIFIS. Residues 244–370 are Cytoplasmic-facing; sequence ARQRIRTNRG…VAKEKRAAKT (127 aa). The helical transmembrane segment at 371–392 threads the bilayer; that stretch reads IAVIIFVFSFCWLPFFVAYVIR. Residues 393 to 407 lie on the Extracellular side of the membrane; that stretch reads PFCETCKLHAKVEQA. Residues 408 to 428 traverse the membrane as a helical segment; that stretch reads FTWLGYINSSLNPFLYGILNL. At 429-455 the chain is on the cytoplasmic side; sequence EFRRAFKKILCPKAVLEQRRRRMSAQP.

The protein belongs to the G-protein coupled receptor 1 family. The different isoforms are expressed in specific, but overlapping sets of sensory, inter- and motor neurons, including AIY, AIZ and RIA interneurons. They are also expressed in pharyngeal cells, head muscles and excretory gland cells.

It localises to the cell membrane. Its function is as follows. G-protein coupled receptor for tyramine, a known neurotransmitter and neuromodulator and direct precursor of octopamine. The rank order of potency is tyramine &gt; octopamine &gt; dopamine &gt; serotonin &gt; epinephrine = norepinephrine. This is Tyramine receptor Ser-2 (ser-2) from Caenorhabditis elegans.